Here is a 346-residue protein sequence, read N- to C-terminus: Small ribosomal subunit biogenesis GTPase RsgA 1 (346 aa).

Positions 93–248 (AEQLIAANFD…VIDTPGMREF (156 aa)) constitute a CP-type G domain. GTP is bound by residues 138–141 (TKAD) and 190–198 (GSSGVGKSS). Positions 271, 276, 278, and 284 each coordinate Zn(2+).

It belongs to the TRAFAC class YlqF/YawG GTPase family. RsgA subfamily. In terms of assembly, monomer. Associates with 30S ribosomal subunit, binds 16S rRNA. It depends on Zn(2+) as a cofactor.

It is found in the cytoplasm. In terms of biological role, one of several proteins that assist in the late maturation steps of the functional core of the 30S ribosomal subunit. Helps release RbfA from mature subunits. May play a role in the assembly of ribosomal proteins into the subunit. Circularly permuted GTPase that catalyzes slow GTP hydrolysis, GTPase activity is stimulated by the 30S ribosomal subunit. The sequence is that of Small ribosomal subunit biogenesis GTPase RsgA 1 from Listeria monocytogenes serovar 1/2a (strain ATCC BAA-679 / EGD-e).